The chain runs to 516 residues: MSCRNFQLSPRCGNRSFSSCSAIMPRMVTHYEVSKAPCRSGGGGGLRALGCLGSRSLCNVGFGRPRVASRCGMPGFGYRAGATCGSSACITPVTINESLLVPLELEIDPTVQRVKRDEKEQIKCLNNRFASFINKVRFLEQKNKLLETKWNFMQQQRSCQSNMEPLFEGYICALRRQLDCVSGDHGRLEAELCSLQEALEGYKKKYEEELSLRPCAENEFVTLKKDVDTAFLVKADLETNLEALEHEIEFLKALFEEEIGLLQSQISETSVIVKMDNSRELDVDGIVAEIKAQYDDIASRSKAEAEAWYQCRYEELRLTAGNHCDNLRNRKNEILEMNKLIQRLQQDIEAVKGQRCKLEGAIAQAEQQGEAALTDAKCKLAGLEEALQKAKQDMACLLKQYQEVMNCKLGLDIEIATYRRLLEGEEHRLCEGIGPVNISVSSSKGAVLYEPCVMGTPMLRTEYCTGTTGVLRNSGGCNVVGTGELYIPCEPQGLLGCGNGRSSSMKVGVGSNSCSR.

Residues Met1–Glu118 are head. The IF rod domain maps to Glu118–Leu429. Residues Lys119–Met153 are coil 1A. A linker 1 region spans residues Gln154–Met163. The coil 1B stretch occupies residues Glu164–Ser264. The tract at residues Gln265–Leu281 is linker 12. A coil 2 region spans residues Asp282–Glu425. The interval Glu426–Arg516 is tail.

It belongs to the intermediate filament family. Heterotetramer of two type I and two type II keratins.

The polypeptide is Keratin, type II cuticular Hb2 (Krt82) (Mus musculus (Mouse)).